The primary structure comprises 194 residues: Fe/S biogenesis protein NfuA (194 aa).

[4Fe-4S] cluster-binding residues include Cys152 and Cys155.

Belongs to the NfuA family. As to quaternary structure, homodimer. It depends on [4Fe-4S] cluster as a cofactor.

Involved in iron-sulfur cluster biogenesis. Binds a 4Fe-4S cluster, can transfer this cluster to apoproteins, and thereby intervenes in the maturation of Fe/S proteins. Could also act as a scaffold/chaperone for damaged Fe/S proteins. This Pseudomonas putida (strain ATCC 700007 / DSM 6899 / JCM 31910 / BCRC 17059 / LMG 24140 / F1) protein is Fe/S biogenesis protein NfuA.